Reading from the N-terminus, the 140-residue chain is Methylglyoxal synthase (140 aa).

The MGS-like domain occupies 1 to 140; it reads MKIALIAHDR…HDQDSNPINL (140 aa). Substrate contacts are provided by residues His-8, Lys-12, 34–37, and 54–55; these read TGTT and SG. Residue Asp-60 is the Proton donor/acceptor of the active site. His-87 contacts substrate.

It belongs to the methylglyoxal synthase family.

The catalysed reaction is dihydroxyacetone phosphate = methylglyoxal + phosphate. Functionally, catalyzes the formation of methylglyoxal from dihydroxyacetone phosphate. This chain is Methylglyoxal synthase, found in Latilactobacillus sakei subsp. sakei (strain 23K) (Lactobacillus sakei subsp. sakei).